Consider the following 732-residue polypeptide: Catalase-peroxidase (732 aa).

A cross-link (tryptophyl-tyrosyl-methioninium (Trp-Tyr) (with M-246)) is located at residues 97–220 (WHSAGTYRTG…LAAVQMGLIY (124 aa)). Catalysis depends on His-98, which acts as the Proton acceptor. The segment at residues 220-246 (YVNPEGPDGKPDPVAAGKDIRETFGRM) is a cross-link (tryptophyl-tyrosyl-methioninium (Tyr-Met) (with W-97)). Residue His-261 participates in heme b binding.

The protein belongs to the peroxidase family. Peroxidase/catalase subfamily. As to quaternary structure, homodimer or homotetramer. Requires heme b as cofactor. Formation of the three residue Trp-Tyr-Met cross-link is important for the catalase, but not the peroxidase activity of the enzyme.

The enzyme catalyses H2O2 + AH2 = A + 2 H2O. It carries out the reaction 2 H2O2 = O2 + 2 H2O. Its function is as follows. Bifunctional enzyme with both catalase and broad-spectrum peroxidase activity. This is Catalase-peroxidase from Chlorobium phaeobacteroides (strain BS1).